Reading from the N-terminus, the 251-residue chain is 5'-nucleotidase SurE (251 aa).

A divalent metal cation contacts are provided by D8, D9, S39, and N90.

This sequence belongs to the SurE nucleotidase family. A divalent metal cation is required as a cofactor.

The protein localises to the cytoplasm. It carries out the reaction a ribonucleoside 5'-phosphate + H2O = a ribonucleoside + phosphate. Nucleotidase that shows phosphatase activity on nucleoside 5'-monophosphates. In Legionella pneumophila subsp. pneumophila (strain Philadelphia 1 / ATCC 33152 / DSM 7513), this protein is 5'-nucleotidase SurE.